Reading from the N-terminus, the 146-residue chain is ATP synthase epsilon chain (146 aa).

The disordered stretch occupies residues 102-122 (QSAKKRAEQHMQEAKEKHNER).

This sequence belongs to the ATPase epsilon chain family. As to quaternary structure, F-type ATPases have 2 components, CF(1) - the catalytic core - and CF(0) - the membrane proton channel. CF(1) has five subunits: alpha(3), beta(3), gamma(1), delta(1), epsilon(1). CF(0) has three main subunits: a, b and c.

It is found in the cell membrane. Produces ATP from ADP in the presence of a proton gradient across the membrane. This is ATP synthase epsilon chain from Lactobacillus gasseri (strain ATCC 33323 / DSM 20243 / BCRC 14619 / CIP 102991 / JCM 1131 / KCTC 3163 / NCIMB 11718 / NCTC 13722 / AM63).